The chain runs to 853 residues: WEB family protein At5g16730, chloroplastic (853 aa).

Low complexity-rich tracts occupy residues 1–27 (MASK…PATP) and 36–49 (KSET…STTT). The transit peptide at 1-84 (MASKTKTSLS…PTPPEKSQAR (84 aa)) directs the protein to the chloroplast. Disordered stretches follow at residues 1–106 (MASK…IKED), 386–465 (KEDL…SKKA), 666–765 (LAKK…SVEV), and 778–820 (KEAF…ALTA). Residues 92–101 (ESPQTTTRLS) show a composition bias toward polar residues. Residues 94–670 (PQTTTRLSQI…LEEAILAKKQ (577 aa)) adopt a coiled-coil conformation. Basic and acidic residues-rich tracts occupy residues 402–465 (EVSK…SKKA), 698–718 (NGHR…HEPP), and 732–753 (MEEK…KKDE). Positions 754-763 (SQDDDKDDSV) are enriched in acidic residues. Basic and acidic residues predominate over residues 778–788 (KEAFPDKKSEL). Position 790 is a phosphoserine (Ser790). A compositionally biased stretch (basic and acidic residues) spans 797–807 (SSKIDESDKTS).

Belongs to the WEB family.

The protein localises to the plastid. Its subcellular location is the chloroplast. The protein is WEB family protein At5g16730, chloroplastic of Arabidopsis thaliana (Mouse-ear cress).